A 386-amino-acid chain; its full sequence is Glyceraldehyde-3-phosphate dehydrogenase, chloroplastic (386 aa).

The N-terminal 45 residues, 1–45 (MAYFKAVAYLAALASAAAFNPGSSFVPRLNAPATQPKAAKMTGPT), are a transit peptide targeting the chloroplast. NADP(+) is bound by residues 58 to 59 (RI) and R125. D-glyceraldehyde 3-phosphate contacts are provided by residues 197 to 199 (SCT), T228, 257 to 258 (TG), and R280. C198 acts as the Nucleophile in catalysis. N362 contacts NADP(+).

It belongs to the glyceraldehyde-3-phosphate dehydrogenase family. Homotetramer.

The protein localises to the plastid. It localises to the chloroplast. The catalysed reaction is D-glyceraldehyde 3-phosphate + phosphate + NADP(+) = (2R)-3-phospho-glyceroyl phosphate + NADPH + H(+). It catalyses the reaction D-glyceraldehyde 3-phosphate + phosphate + NAD(+) = (2R)-3-phospho-glyceroyl phosphate + NADH + H(+). It functions in the pathway carbohydrate biosynthesis; Calvin cycle. In Guillardia theta (Cryptophyte), this protein is Glyceraldehyde-3-phosphate dehydrogenase, chloroplastic (GAPC1).